The chain runs to 400 residues: Acetate kinase (400 aa).

N10 contacts Mg(2+). Residue K17 participates in ATP binding. Residue R91 coordinates substrate. D150 (proton donor/acceptor) is an active-site residue. ATP-binding positions include 210–214, 285–287, and 333–337; these read HLGNG, DCR, and GIGEN. Residue E387 coordinates Mg(2+).

This sequence belongs to the acetokinase family. In terms of assembly, homodimer. Mg(2+) serves as cofactor. The cofactor is Mn(2+).

Its subcellular location is the cytoplasm. It catalyses the reaction acetate + ATP = acetyl phosphate + ADP. It functions in the pathway metabolic intermediate biosynthesis; acetyl-CoA biosynthesis; acetyl-CoA from acetate: step 1/2. Functionally, catalyzes the formation of acetyl phosphate from acetate and ATP. Can also catalyze the reverse reaction. In Photorhabdus laumondii subsp. laumondii (strain DSM 15139 / CIP 105565 / TT01) (Photorhabdus luminescens subsp. laumondii), this protein is Acetate kinase.